A 124-amino-acid chain; its full sequence is METVLYIAVFGALGCLSRYYLSGWVYELFGRAFPYGTFAVNIVGAFCIGLIMEFSLRSALVSPQLRIGLTIGFLGGLTTFSTFSYETFRLLEDGELLIASANVLFSVMTCLVFTWLGIIVAKAL.

Transmembrane regions (helical) follow at residues 4 to 24 (VLYI…LSGW), 32 to 52 (AFPY…GLIM), 67 to 87 (IGLT…SYET), and 101 to 121 (ANVL…IIVA). Positions 75 and 78 each coordinate Na(+).

It belongs to the fluoride channel Fluc/FEX (TC 1.A.43) family.

It localises to the cell inner membrane. It carries out the reaction fluoride(in) = fluoride(out). Na(+) is not transported, but it plays an essential structural role and its presence is essential for fluoride channel function. Fluoride-specific ion channel. Important for reducing fluoride concentration in the cell, thus reducing its toxicity. In Geotalea uraniireducens (strain Rf4) (Geobacter uraniireducens), this protein is Fluoride-specific ion channel FluC.